Here is a 54-residue protein sequence, read N- to C-terminus: Large ribosomal subunit protein bL32c (54 aa).

This sequence belongs to the bacterial ribosomal protein bL32 family.

The protein resides in the plastid. Its subcellular location is the chloroplast. In Gossypium barbadense (Sea Island cotton), this protein is Large ribosomal subunit protein bL32c.